The primary structure comprises 229 residues: RNA pyrophosphohydrolase (229 aa).

In terms of domain architecture, Nudix hydrolase spans 6 to 149 (GFRPNVGIIL…KRGVYEMALT (144 aa)). The Nudix box signature appears at 38 to 59 (GGIDRGETPEQAMFRELHEEVG). Residues 191–229 (KPGMELPPGASFDPDPQNSVPAPLEALPTLPVPKKPLDA) form a disordered region. The segment covering 220–229 (LPVPKKPLDA) has biased composition (pro residues).

This sequence belongs to the Nudix hydrolase family. RppH subfamily. Requires a divalent metal cation as cofactor.

Its function is as follows. Accelerates the degradation of transcripts by removing pyrophosphate from the 5'-end of triphosphorylated RNA, leading to a more labile monophosphorylated state that can stimulate subsequent ribonuclease cleavage. The polypeptide is RNA pyrophosphohydrolase (Acidovorax ebreus (strain TPSY) (Diaphorobacter sp. (strain TPSY))).